Reading from the N-terminus, the 428-residue chain is Glutamine synthetase leaf isozyme, chloroplastic (428 aa).

A chloroplast-targeting transit peptide spans 1–49; the sequence is MAQILAPSIQCQTRITKTSPLATPISSKMWSSLVMKQNKKVARSAKFRV. A GS beta-grasp domain is found at 75-155; sequence IIAEYIWIGG…VICDAYTPQG (81 aa). Residues 159–428 enclose the GS catalytic domain; that stretch reads PTNKRHKAAE…LAAQKIALKV (270 aa).

The protein belongs to the glutamine synthetase family. In terms of assembly, homooctamer.

It is found in the plastid. It localises to the chloroplast. The enzyme catalyses L-glutamate + NH4(+) + ATP = L-glutamine + ADP + phosphate + H(+). In terms of biological role, the light-modulated chloroplast enzyme, encoded by a nuclear gene and expressed primarily in leaves, is responsible for the reassimilation of the ammonia generated by photorespiration. This chain is Glutamine synthetase leaf isozyme, chloroplastic (GS2), found in Medicago sativa (Alfalfa).